The following is a 501-amino-acid chain: Glucose-6-phosphate exchanger SLC37A2 (501 aa).

The chain crosses the membrane as a helical span at residues 19–39 (SWFRGLILLLTFLIYACYHMS). Residues Asn-53, Asn-62, and Asn-68 are each glycosylated (N-linked (GlcNAc...) asparagine). 5 helical membrane passes run 88–108 (GGVDNAFLIAYAIGMFISGVF), 118–138 (LSAGMLLSGLFTSLFGLGYFW), 145–165 (YFVVIQVCNGLVQTTGWPSVV), 189–209 (SVGNILGSLIAGIWVNGQWGL), and 210–230 (SFIVPGIITAVMGVITFLFLI). The interval 240–262 (PPQHHGEPAENQDNPEDPGNSPC) is disordered. The next 6 membrane-spanning stretches (helical) occupy residues 302–322 (LCLLFAKLVSYTFLYWLPLYI), 334–354 (GDLSTLFDVGGIIGGIVAGLV), 362–382 (ATTCCVMLILAAPMMFLYNYI), 391–411 (IVMLIICGGLVNGPYALITTA), 434–454 (AIIDGTGSIGAALGPLLAGLI), and 462–482 (VFYMLISADVLACLLLCRLVY).

Belongs to the major facilitator superfamily. Organophosphate:Pi antiporter (OPA) (TC 2.A.1.4) family. In terms of tissue distribution, detected in intestine and pancreas. Lower expression is also detected in liver and kidney.

Its subcellular location is the endoplasmic reticulum membrane. The catalysed reaction is D-glucose 6-phosphate(in) + phosphate(out) = D-glucose 6-phosphate(out) + phosphate(in). With respect to regulation, inhibited by vanadate but not by chlorogenic acid. Inorganic phosphate and glucose-6-phosphate antiporter. May transport cytoplasmic glucose-6-phosphate into the lumen of the endoplasmic reticulum and translocate inorganic phosphate into the opposite direction. Independent of a lumenal glucose-6-phosphatase. May not play a role in homeostatic regulation of blood glucose levels. The protein is Glucose-6-phosphate exchanger SLC37A2 of Homo sapiens (Human).